The chain runs to 220 residues: MENQSLMPREKLLKSGAETLENYELLAIFLRTGIKNCPVIQLSQAVLRYFGSLRGLISADQEQFCQFKGIGITQYIQLQACTEMTKRYLAEELTFAHEFTNPLTVRLYLQTELEHYEREVFSVLFLDNQHRLIKKEDMFRGTINAASVYPREIIKTALYCNAAALILAHNHPSGSAEPSASDKQMTKRIQAAAELMEIRVLDHFVIGKGCYFSFAEQDWL.

In terms of domain architecture, MPN spans 98–220 (EFTNPLTVRL…YFSFAEQDWL (123 aa)). 3 residues coordinate Zn(2+): histidine 169, histidine 171, and aspartate 182. The JAMM motif motif lies at 169-182 (HNHPSGSAEPSASD).

The protein belongs to the UPF0758 family.

The chain is UPF0758 protein Asuc_0013 from Actinobacillus succinogenes (strain ATCC 55618 / DSM 22257 / CCUG 43843 / 130Z).